We begin with the raw amino-acid sequence, 201 residues long: Small ribosomal subunit protein uS10m (201 aa).

This sequence belongs to the universal ribosomal protein uS10 family. Component of the mitochondrial ribosome small subunit (28S) which comprises a 12S rRNA and about 30 distinct proteins.

The protein resides in the mitochondrion. The polypeptide is Small ribosomal subunit protein uS10m (MRPS10) (Pongo abelii (Sumatran orangutan)).